The chain runs to 427 residues: 3-phosphoshikimate 1-carboxyvinyltransferase (427 aa).

Lys22, Ser23, and Arg27 together coordinate 3-phosphoshikimate. A phosphoenolpyruvate-binding site is contributed by Lys22. Residues Gly96 and Arg124 each coordinate phosphoenolpyruvate. 3-phosphoshikimate-binding residues include Ser169, Ser170, Gln171, Ser197, Asp313, Asn336, and Lys340. Gln171 contacts phosphoenolpyruvate. Asp313 functions as the Proton acceptor in the catalytic mechanism. Residues Arg344, Arg386, and Lys411 each contribute to the phosphoenolpyruvate site.

It belongs to the EPSP synthase family. As to quaternary structure, monomer.

The protein localises to the cytoplasm. The catalysed reaction is 3-phosphoshikimate + phosphoenolpyruvate = 5-O-(1-carboxyvinyl)-3-phosphoshikimate + phosphate. Its pathway is metabolic intermediate biosynthesis; chorismate biosynthesis; chorismate from D-erythrose 4-phosphate and phosphoenolpyruvate: step 6/7. Catalyzes the transfer of the enolpyruvyl moiety of phosphoenolpyruvate (PEP) to the 5-hydroxyl of shikimate-3-phosphate (S3P) to produce enolpyruvyl shikimate-3-phosphate and inorganic phosphate. In Shigella sonnei, this protein is 3-phosphoshikimate 1-carboxyvinyltransferase.